Here is a 274-residue protein sequence, read N- to C-terminus: Nitrogenase iron protein (274 aa).

8-15 (GKGGIGKS) lines the ATP pocket. Cys94 provides a ligand contact to [4Fe-4S] cluster. Arg97 is subject to ADP-ribosylarginine; by dinitrogenase reductase ADP-ribosyltransferase. Cys131 contacts [4Fe-4S] cluster.

It belongs to the NifH/BchL/ChlL family. As to quaternary structure, homodimer. It depends on [4Fe-4S] cluster as a cofactor. The reversible ADP-ribosylation of Arg-97 inactivates the nitrogenase reductase and regulates nitrogenase activity.

The catalysed reaction is N2 + 8 reduced [2Fe-2S]-[ferredoxin] + 16 ATP + 16 H2O = H2 + 8 oxidized [2Fe-2S]-[ferredoxin] + 2 NH4(+) + 16 ADP + 16 phosphate + 6 H(+). Functionally, the key enzymatic reactions in nitrogen fixation are catalyzed by the nitrogenase complex, which has 2 components: the iron protein and the molybdenum-iron protein. The protein is Nitrogenase iron protein of Chlorobium phaeobacteroides (strain BS1).